Reading from the N-terminus, the 378-residue chain is Queuine tRNA-ribosyltransferase (378 aa).

The active-site Proton acceptor is aspartate 90. Substrate-binding positions include 90-94 (DSGGF), aspartate 144, glutamine 188, and glycine 220. An RNA binding region spans residues 251–257 (GVGTPED). Aspartate 270 acts as the Nucleophile in catalysis. The interval 275–279 (TRNAR) is RNA binding; important for wobble base 34 recognition. The Zn(2+) site is built by cysteine 308, cysteine 310, cysteine 313, and histidine 339.

It belongs to the queuine tRNA-ribosyltransferase family. As to quaternary structure, homodimer. Within each dimer, one monomer is responsible for RNA recognition and catalysis, while the other monomer binds to the replacement base PreQ1. Zn(2+) is required as a cofactor.

It catalyses the reaction 7-aminomethyl-7-carbaguanine + guanosine(34) in tRNA = 7-aminomethyl-7-carbaguanosine(34) in tRNA + guanine. It functions in the pathway tRNA modification; tRNA-queuosine biosynthesis. Its function is as follows. Catalyzes the base-exchange of a guanine (G) residue with the queuine precursor 7-aminomethyl-7-deazaguanine (PreQ1) at position 34 (anticodon wobble position) in tRNAs with GU(N) anticodons (tRNA-Asp, -Asn, -His and -Tyr). Catalysis occurs through a double-displacement mechanism. The nucleophile active site attacks the C1' of nucleotide 34 to detach the guanine base from the RNA, forming a covalent enzyme-RNA intermediate. The proton acceptor active site deprotonates the incoming PreQ1, allowing a nucleophilic attack on the C1' of the ribose to form the product. After dissociation, two additional enzymatic reactions on the tRNA convert PreQ1 to queuine (Q), resulting in the hypermodified nucleoside queuosine (7-(((4,5-cis-dihydroxy-2-cyclopenten-1-yl)amino)methyl)-7-deazaguanosine). This Nautilia profundicola (strain ATCC BAA-1463 / DSM 18972 / AmH) protein is Queuine tRNA-ribosyltransferase.